The primary structure comprises 401 residues: Inositol phosphorylceramide synthase catalytic subunit AUR1 (401 aa).

Over 1 to 41 (MANPFSRWFLSERPPNCHVADLETSLDPHQTLLKVQKYKPA) the chain is Cytoplasmic. A helical membrane pass occupies residues 42–62 (LSDWVHYIFLGSIMLFVFITN). The Lumenal portion of the chain corresponds to 63 to 64 (PA). A helical membrane pass occupies residues 65 to 85 (PWIFKILFYCFLGTLFIIPAT). Over 86–87 (SQ) the chain is Cytoplasmic. Residues 88–108 (FFFNALPILTWVALYFTSSYF) form a helical membrane-spanning segment. At 109–155 (PDDRRPPITVKVLPAVETILYGDNLSDILATSTNSFLDILAWLPYGL) the chain is on the lumenal side. Asn132 carries N-linked (GlcNAc...) asparagine glycosylation. The helical transmembrane segment at 156 to 176 (FHFGAPFVVAAILFVFGPPTV) threads the bilayer. At 177-178 (LQ) the chain is on the cytoplasmic side. Residues 179–199 (GYAFAFGYMNLFGVIMQNVFP) traverse the membrane as a helical segment. The Lumenal portion of the chain corresponds to 200 to 245 (AAPPWYKILYGLQSANYDMHGSPGGLARIDKLLGINMYTTAFSNSS). The helical transmembrane segment at 246-266 (VIFGAFPSLHSGCATMEALFF) threads the bilayer. At 267–268 (CY) the chain is on the cytoplasmic side. Residues 269–289 (CFPKLKPLFIAYVCWLWWSTM) form a helical membrane-spanning segment. The Lumenal segment spans residues 290–291 (YL). The chain crosses the membrane as a helical span at residues 292 to 312 (THHYFVDLMAGSVLSYVIFQY). The Cytoplasmic segment spans residues 313-401 (TKYTHLPIVD…SITSLGVKRA (89 aa)). A disordered region spans residues 374–401 (VSPSLFDGSTSVSRSSATSITSLGVKRA). The segment covering 382-395 (STSVSRSSATSITS) has biased composition (low complexity). Phosphoserine is present on residues Ser392 and Ser395.

The protein belongs to the AUR1 family. In terms of assembly, component of the inositol phosphorylceramide synthase complex composed of at least AUR1 and KEI1.

The protein resides in the golgi apparatus. Its subcellular location is the golgi stack membrane. The enzyme catalyses an N-(2R-hydroxy-very-long-chain fatty acyl)-(R)-4-hydroxysphingoid base + a 1,2-diacyl-sn-glycero-3-phospho-(1D-myo-inositol) = a 1D-myo-inositol-1-phospho-N-[(R)-2-hydroxy-very-long-chain fatty acyl]-(R)-4-hydroxysphingoid base + a 1,2-diacyl-sn-glycerol. With respect to regulation, inhibited by aureobasidin A (AbA), khafrefungin and rustmicin. Catalytic component of the inositol phosphorylceramide synthase which catalyzes the addition of a phosphorylinositol group onto ceramide to form inositol phosphorylceramide, an essential step in sphingolipid biosynthesis. The chain is Inositol phosphorylceramide synthase catalytic subunit AUR1 from Saccharomyces cerevisiae (strain ATCC 204508 / S288c) (Baker's yeast).